The following is a 487-amino-acid chain: Transcription factor GTE5, chloroplastic (487 aa).

Residues 1-32 (MSSEHISGGGASKTKKHKWSSSQNRPKPMGVS) constitute a chloroplast transit peptide. Disordered regions lie at residues 1–48 (MSSE…NSFA), 93–127 (ANPG…GADK), and 400–487 (KNEA…DNGN). A Bromo domain is found at 127–233 (KGTVQIFKNC…NMFEDKWVSI (107 aa)). Residues 320-401 (EEEAPVNNRD…GYKESLSKKN (82 aa)) form the NET domain. Residues 400–414 (KNEAHGFGSERDAES) show a composition bias toward basic and acidic residues. Residues 415-435 (VHNSIQEPTTLVSGTTTSRVT) show a composition bias toward polar residues. The span at 451 to 487 (NNASGSSSSNSSSSDSGSCSSDTDSDSSSGRGSDNGN) shows a compositional bias: low complexity.

In terms of assembly, interacts with SIZ1 (via PHD domain). Sumoylated by SIZ1.

The protein resides in the plastid. It localises to the chloroplast. The chain is Transcription factor GTE5, chloroplastic (GTE5) from Arabidopsis thaliana (Mouse-ear cress).